A 542-amino-acid chain; its full sequence is La-related protein 7 homolog (542 aa).

The 128-residue stretch at valine 112–glutamine 239 folds into the HTH La-type RNA-binding domain. The 89-residue stretch at arginine 247 to lysine 335 folds into the RRM domain. In terms of domain architecture, xRRM spans glutamate 374–lysine 542.

Belongs to the LARP7 family. In terms of assembly, component of the telomerase holoenzyme complex, composed of the catalytic core (the catalytic subunit TERT, the telomerase RNA template component TER and TAP65/p65), which is associated with two heterotrimeric subcomplexes: (i) the replication protein A (RPA)-related subcomplex, composed of TEB1, RPA2/TEB2 and RPA3/TEB3 and (ii) the CST-like subcomplex, composed of TAP75/p75, TAP45/p45 and TAP19/p19. TEB1 and the CST-like subcomplex are tethered to the catalytic core by TAP50/p50.

Its subcellular location is the chromosome. The protein resides in the telomere. Functionally, RNA-binding protein required for assembly of the holoenzyme telomerase ribonucleoprotein (RNP) complex. Telomerase is an essential ribonucleoprotein enzyme that copies new telomeric repeats onto chromosome ends by repetitively synthesizing the short telomere-repeat sequence 5'-TTGGGG-3' using an RNA template component TER. TAP65/p65 specifically binds telomerase RNA template TER and is required for biogenesis and placement of the TER stem-terminus element: TAP65/p65 first protects the 3'-end of TER from degradation and acts as a chaperone to correctly fold TER for protein binding; it then bends TER stem-loop IV to position it for interaction of stem-loop IV with catalytic TERT RNA-binding domain. The protein is La-related protein 7 homolog of Tetrahymena thermophila (strain SB210).